Here is a 731-residue protein sequence, read N- to C-terminus: Ubiquitin carboxyl-terminal hydrolase 17 (731 aa).

Positions 57, 60, 68, 71, 77, 81, 90, and 94 each coordinate Zn(2+). The segment at 57 to 94 (CAVCLYPTTTRCSQCKSVRYCSSKCQILHWRRGHKEEC) adopts an MYND-type zinc-finger fold. 2 disordered regions span residues 171–219 (YETR…DSAN) and 262–281 (LPSK…SGLK). 2 stretches are compositionally biased toward polar residues: residues 207-219 (GNQN…DSAN) and 265-281 (KANS…SGLK). Residues 329-633 (FGLVNLGNSC…GAYMLLYARD (305 aa)) form the USP domain. Residue cysteine 338 is the Nucleophile of the active site. The Proton acceptor role is filled by histidine 592. Residues 637–702 (PVSKNGGRKS…TSSCSTKDSS (66 aa)) form a disordered region. Positions 677-701 (DWSSGSLSSMFSSSDTTSSCSTKDS) are enriched in low complexity.

This sequence belongs to the peptidase C19 family.

The enzyme catalyses Thiol-dependent hydrolysis of ester, thioester, amide, peptide and isopeptide bonds formed by the C-terminal Gly of ubiquitin (a 76-residue protein attached to proteins as an intracellular targeting signal).. Recognizes and hydrolyzes the peptide bond at the C-terminal Gly of ubiquitin. Involved in the processing of poly-ubiquitin precursors as well as that of ubiquitinated proteins. This is Ubiquitin carboxyl-terminal hydrolase 17 (UBP17) from Arabidopsis thaliana (Mouse-ear cress).